The primary structure comprises 201 residues: Guanylate kinase (201 aa).

The Guanylate kinase-like domain occupies glycine 7 to asparagine 186. Serine 14 to threonine 21 lines the ATP pocket.

This sequence belongs to the guanylate kinase family.

The protein resides in the cytoplasm. The catalysed reaction is GMP + ATP = GDP + ADP. In terms of biological role, essential for recycling GMP and indirectly, cGMP. The polypeptide is Guanylate kinase (Wolbachia pipientis wMel).